The following is a 462-amino-acid chain: Putative endoglucanase type B (462 aa).

A signal peptide spans M1 to A16. The CBM1 domain maps to C25–Q61. Intrachain disulfides connect C33–C50 and C44–C60. The N-linked (GlcNAc...) asparagine glycan is linked to N37. Low complexity predominate over residues S64–P100. The interval S64–A102 is disordered. Positions E66–A99 are linker. The interval P100–L462 is catalytic. The active site involves D190. C191 and C250 are oxidised to a cystine. N223 carries an N-linked (GlcNAc...) asparagine glycan. Residue D236 is the Proton donor of the active site. Residues N272 and N317 are each glycosylated (N-linked (GlcNAc...) asparagine). A disulfide bridge connects residues C383 and C430. D416 serves as the catalytic Nucleophile.

Belongs to the glycosyl hydrolase 6 (cellulase B) family.

The catalysed reaction is Endohydrolysis of (1-&gt;4)-beta-D-glucosidic linkages in cellulose, lichenin and cereal beta-D-glucans.. The polypeptide is Putative endoglucanase type B (Fusarium oxysporum (Fusarium vascular wilt)).